A 1342-amino-acid polypeptide reads, in one-letter code: DNA-directed RNA polymerase subunit beta (1342 aa).

It belongs to the RNA polymerase beta chain family. In terms of assembly, the RNAP catalytic core consists of 2 alpha, 1 beta, 1 beta' and 1 omega subunit. When a sigma factor is associated with the core the holoenzyme is formed, which can initiate transcription.

The enzyme catalyses RNA(n) + a ribonucleoside 5'-triphosphate = RNA(n+1) + diphosphate. Functionally, DNA-dependent RNA polymerase catalyzes the transcription of DNA into RNA using the four ribonucleoside triphosphates as substrates. This Klebsiella pneumoniae subsp. pneumoniae (strain ATCC 700721 / MGH 78578) protein is DNA-directed RNA polymerase subunit beta.